The primary structure comprises 511 residues: Protein phosphatase 2C 16 (511 aa).

The first 22 residues, 1 to 22 (MEEMTPAVAMTLSLAANTMCES), serve as a signal peptide directing secretion. The 313-residue stretch at 189-501 (LWGTVSIQGN…DNISIIVIDL (313 aa)) folds into the PPM-type phosphatase domain. Residues aspartate 243, glycine 244, aspartate 432, and aspartate 492 each coordinate Mn(2+).

This sequence belongs to the PP2C family. As to quaternary structure, interacts with SWI3B (via N-terminus). Interacts with ABA-bounded PYR1, PYL1, PYL2, PYL3, PYL4, PYL5, PYL6, PYL8 and PYL9, and with free PYL2, PYL3, PYL4, PYL10 and PYL13. Mg(2+) is required as a cofactor. Requires Mn(2+) as cofactor. In terms of tissue distribution, expressed in seeds, roots, stems, leaves and flowers, especially in meristematic tissues, guard cells, embryo and siliques.

The protein resides in the cytoplasm. It is found in the nucleus. It catalyses the reaction O-phospho-L-seryl-[protein] + H2O = L-seryl-[protein] + phosphate. It carries out the reaction O-phospho-L-threonyl-[protein] + H2O = L-threonyl-[protein] + phosphate. With respect to regulation, repressed by PYR/PYL/RCAR ABA receptors in an ABA-dependent manner. Its function is as follows. Key component and repressor of the abscisic acid (ABA) signaling pathway that regulates numerous ABA responses, such as stomatal closure, seed germination and inhibition of vegetative growth. Confers enhanced sensitivity to drought. The protein is Protein phosphatase 2C 16 (HAB1) of Arabidopsis thaliana (Mouse-ear cress).